The following is a 238-amino-acid chain: Uridylate kinase (238 aa).

12–15 (KLSG) is an ATP binding site. The segment at 20-25 (GDEGFG) is involved in allosteric activation by GTP. Gly54 contributes to the UMP binding site. Residues Gly55 and Arg59 each contribute to the ATP site. UMP is bound by residues Asp74 and 135–142 (TGSPFFTT). ATP contacts are provided by Thr162, Tyr168, and Asp171.

The protein belongs to the UMP kinase family. In terms of assembly, homohexamer.

The protein resides in the cytoplasm. It carries out the reaction UMP + ATP = UDP + ADP. It participates in pyrimidine metabolism; CTP biosynthesis via de novo pathway; UDP from UMP (UMPK route): step 1/1. Allosterically activated by GTP. Inhibited by UTP. Functionally, catalyzes the reversible phosphorylation of UMP to UDP. The chain is Uridylate kinase from Histophilus somni (strain 129Pt) (Haemophilus somnus).